A 628-amino-acid chain; its full sequence is tRNA (guanine(37)-N(1))-methyltransferase (628 aa).

S-adenosyl-L-methionine contacts are provided by residues histidine 265, 303-304 (DL), 342-343 (DG), and asparagine 445.

It belongs to the class I-like SAM-binding methyltransferase superfamily. TRM5/TYW2 family. As to quaternary structure, monomer.

It localises to the mitochondrion matrix. The protein localises to the nucleus. The protein resides in the cytoplasm. The catalysed reaction is guanosine(37) in tRNA + S-adenosyl-L-methionine = N(1)-methylguanosine(37) in tRNA + S-adenosyl-L-homocysteine + H(+). Functionally, specifically methylates the N1 position of guanosine-37 in various cytoplasmic and mitochondrial tRNAs. Methylation is not dependent on the nature of the nucleoside 5' of the target nucleoside. This is the first step in the biosynthesis of wybutosine (yW), a modified base adjacent to the anticodon of tRNAs and required for accurate decoding. The chain is tRNA (guanine(37)-N(1))-methyltransferase from Mycosarcoma maydis (Corn smut fungus).